A 378-amino-acid polypeptide reads, in one-letter code: Probable selenide, water dikinase (378 aa).

The active site involves cysteine 33. ATP contacts are provided by residues lysine 36, 63 to 65, aspartate 83, aspartate 106, and 158 to 160; these read GLD and GQT. Mg(2+) is bound at residue aspartate 65. Residue aspartate 106 participates in Mg(2+) binding. Residue aspartate 260 participates in Mg(2+) binding.

This sequence belongs to the selenophosphate synthase 1 family. Class I subfamily. Homodimer. Mg(2+) serves as cofactor.

The enzyme catalyses hydrogenselenide + ATP + H2O = selenophosphate + AMP + phosphate + 2 H(+). In terms of biological role, synthesizes selenophosphate from selenide and ATP. The chain is Probable selenide, water dikinase (seld-1) from Caenorhabditis elegans.